The primary structure comprises 259 residues: Flap endonuclease Xni (259 aa).

Asp109 contributes to the Mg(2+) binding site. A 5'-3' exonuclease domain is found at 165 to 255 (LKPEQLADYW…FNLQDIRYEK (91 aa)). Leu176, Ala177, Ile187, and Val190 together coordinate K(+). Residues 189–194 (GVGPKA) are interaction with DNA.

The protein belongs to the Xni family. Requires Mg(2+) as cofactor. K(+) serves as cofactor.

Its function is as follows. Has flap endonuclease activity. During DNA replication, flap endonucleases cleave the 5'-overhanging flap structure that is generated by displacement synthesis when DNA polymerase encounters the 5'-end of a downstream Okazaki fragment. In Aliivibrio fischeri (strain ATCC 700601 / ES114) (Vibrio fischeri), this protein is Flap endonuclease Xni.